Here is a 534-residue protein sequence, read N- to C-terminus: Benzaldehyde dehydrogenase, mitochondrial (534 aa).

Residues 1–29 (MAAHRFSSLLSRSVPLLSRGGKQSYLGRG) constitute a mitochondrion transit peptide. Residues 199–202 (IPWN), 225–228 (KTAE), 258–259 (GP), 278–279 (GS), and 301–303 (ELG) each bind NAD(+). Glu301 functions as the Proton acceptor in the catalytic mechanism. Residue Cys335 is the Nucleophile of the active site. NAD(+) contacts are provided by residues 381-385 (DQFEK) and 432-434 (EIF).

The protein belongs to the aldehyde dehydrogenase family. Homotetramer. Expressed predominantly in the upper and lower flower petal lobes, and, at low levels, in flower tubes, pistils, stamens and sepals.

The protein resides in the mitochondrion. The enzyme catalyses an aldehyde + NAD(+) + H2O = a carboxylate + NADH + 2 H(+). It catalyses the reaction acetaldehyde + NAD(+) + H2O = acetate + NADH + 2 H(+). The catalysed reaction is benzaldehyde + NAD(+) + H2O = benzoate + NADH + 2 H(+). It carries out the reaction 2-phenylacetaldehyde + NAD(+) + H2O = 2-phenylacetate + NADH + 2 H(+). Its pathway is aromatic compound metabolism. Its activity is regulated as follows. Inhibited by disulfiram. Component of the floral volatile benzenoid/phenylpropanoid (FVBP) biosynthetic pathway. Catalyzes the oxidation of benzaldehyde to benzoic acid (BA). Capable of oxidizing a broad spectrum of aliphatic aldehydes; increased carbon chain length results in a decrease in its efficiency. The chain is Benzaldehyde dehydrogenase, mitochondrial from Antirrhinum majus (Garden snapdragon).